A 548-amino-acid polypeptide reads, in one-letter code: Esterase-5A (548 aa).

Positions 1–19 are cleaved as a signal peptide; that stretch reads MHLVRWLICLIQLWIQLGA. The cysteines at positions 87 and 106 are disulfide-linked. 2 N-linked (GlcNAc...) asparagine glycosylation sites follow: Asn95 and Asn116. Ser210 serves as the catalytic Acyl-ester intermediate. A disulfide bridge connects residues Cys262 and Cys274. Asn479 carries an N-linked (GlcNAc...) asparagine glycan. Cys518 and Cys539 are oxidised to a cystine.

This sequence belongs to the type-B carboxylesterase/lipase family.

It localises to the secreted. The catalysed reaction is a carboxylic ester + H2O = an alcohol + a carboxylate + H(+). The sequence is that of Esterase-5A (Est-5A) from Drosophila persimilis (Fruit fly).